Here is a 243-residue protein sequence, read N- to C-terminus: Venom nerve growth factor (243 aa).

Positions 1-18 (MSMLCYTLIIVFLIGIWA) are cleaved as a signal peptide. A propeptide spanning residues 19–125 (APKSEDNVPL…TLNRNIRAKR (107 aa)) is cleaved from the precursor. Basic and acidic residues predominate over residues 47 to 66 (GLKTSRNTDQRHPAPKKAED). The disordered stretch occupies residues 47–69 (GLKTSRNTDQRHPAPKKAEDQEL). 3 disulfide bridges follow: cysteine 139–cysteine 204, cysteine 182–cysteine 232, and cysteine 192–cysteine 234. Asparagine 148 carries N-linked (GlcNAc...) asparagine glycosylation.

It belongs to the NGF-beta family. In terms of assembly, homodimer; non-covalently linked. In terms of tissue distribution, expressed by the venom gland.

It localises to the secreted. Its function is as follows. Nerve growth factor is important for the development and maintenance of the sympathetic and sensory nervous systems. It stimulates division and differentiation of sympathetic and embryonic sensory neurons as well as basal forebrain cholinergic neurons in the brain. Its relevance in the snake venom is not clear. However, it has been shown to inhibit metalloproteinase-dependent proteolysis of platelet glycoprotein Ib alpha, suggesting a metalloproteinase inhibition to prevent metalloprotease autodigestion and/or protection against prey proteases. Binds a lipid between the two protein chains in the homodimer. The lipid-bound form promotes histamine relase from mouse mast cells, contrary to the lipid-free form. This chain is Venom nerve growth factor, found in Oxyuranus scutellatus scutellatus (Australian taipan).